The primary structure comprises 713 residues: Polyribonucleotide nucleotidyltransferase (713 aa).

Asp-493 and Asp-499 together coordinate Mg(2+). Residues 560-619 (PRMITIKINPEKIRDVIGKGGSVIRALTEETGTTIDISDDGVVTIASTNSEGMAEAKKRI) enclose the KH domain. The S1 motif domain maps to 629-697 (GHVYEGTVLK…EKGRVRLSAK (69 aa)).

The protein belongs to the polyribonucleotide nucleotidyltransferase family. Mg(2+) serves as cofactor.

The protein resides in the cytoplasm. It catalyses the reaction RNA(n+1) + phosphate = RNA(n) + a ribonucleoside 5'-diphosphate. In terms of biological role, involved in mRNA degradation. Catalyzes the phosphorolysis of single-stranded polyribonucleotides processively in the 3'- to 5'-direction. This chain is Polyribonucleotide nucleotidyltransferase, found in Burkholderia mallei (strain NCTC 10247).